The sequence spans 431 residues: Glucose-1-phosphate adenylyltransferase (431 aa).

Lysine 39 contacts beta-D-fructose 1,6-bisphosphate. Arginine 40, histidine 46, and arginine 52 together coordinate AMP. Tyrosine 114 serves as a coordination point for alpha-D-glucose 1-phosphate. Arginine 130 lines the AMP pocket. Residues glycine 179, 194–195 (EK), and serine 212 each bind alpha-D-glucose 1-phosphate. AMP is bound by residues glutamate 370 and arginine 386. Residues 419-423 (REMLR) and 429-431 (QER) contribute to the beta-D-fructose 1,6-bisphosphate site.

The protein belongs to the bacterial/plant glucose-1-phosphate adenylyltransferase family. Homotetramer.

The enzyme catalyses alpha-D-glucose 1-phosphate + ATP + H(+) = ADP-alpha-D-glucose + diphosphate. It functions in the pathway glycan biosynthesis; glycogen biosynthesis. Allosterically activated by fructose-1,6-bisphosphate (F16BP) and inhibited by AMP. Functionally, involved in the biosynthesis of ADP-glucose, a building block required for the elongation reactions to produce glycogen. Catalyzes the reaction between ATP and alpha-D-glucose 1-phosphate (G1P) to produce pyrophosphate and ADP-Glc. The polypeptide is Glucose-1-phosphate adenylyltransferase (Escherichia coli O127:H6 (strain E2348/69 / EPEC)).